The primary structure comprises 221 residues: Orotidine 5'-phosphate decarboxylase (221 aa).

Substrate-binding positions include D12, K34, 60–69 (DFKVADIPNT), S117, 170–180 (PGVGAQGGKAS), G193, and R194. The Proton donor role is filled by K62.

Belongs to the OMP decarboxylase family. Type 1 subfamily. As to quaternary structure, homodimer.

The enzyme catalyses orotidine 5'-phosphate + H(+) = UMP + CO2. The protein operates within pyrimidine metabolism; UMP biosynthesis via de novo pathway; UMP from orotate: step 2/2. In terms of biological role, catalyzes the decarboxylation of orotidine 5'-monophosphate (OMP) to uridine 5'-monophosphate (UMP). This is Orotidine 5'-phosphate decarboxylase from Methanosarcina barkeri (strain Fusaro / DSM 804).